Here is a 459-residue protein sequence, read N- to C-terminus: Exodeoxyribonuclease 7 large subunit (459 aa).

The protein belongs to the XseA family. As to quaternary structure, heterooligomer composed of large and small subunits.

The protein localises to the cytoplasm. It carries out the reaction Exonucleolytic cleavage in either 5'- to 3'- or 3'- to 5'-direction to yield nucleoside 5'-phosphates.. Functionally, bidirectionally degrades single-stranded DNA into large acid-insoluble oligonucleotides, which are then degraded further into small acid-soluble oligonucleotides. This is Exodeoxyribonuclease 7 large subunit from Pseudomonas fluorescens (strain Pf0-1).